The primary structure comprises 122 residues: MRKKSSTPNRGFRVADQIQRDLTELIARELKDPRVGMVTVQSVEVTPDYAHAKIYFSVLVGDPKECEIALNQAAGFLRNGLFKRLMTHTVPTLHFHFDQTTERAADLNALIAKAVSSRAQDD.

The protein belongs to the RbfA family. In terms of assembly, monomer. Binds 30S ribosomal subunits, but not 50S ribosomal subunits or 70S ribosomes.

The protein localises to the cytoplasm. Its function is as follows. One of several proteins that assist in the late maturation steps of the functional core of the 30S ribosomal subunit. Associates with free 30S ribosomal subunits (but not with 30S subunits that are part of 70S ribosomes or polysomes). Required for efficient processing of 16S rRNA. May interact with the 5'-terminal helix region of 16S rRNA. This is Ribosome-binding factor A from Polaromonas naphthalenivorans (strain CJ2).